The sequence spans 446 residues: NADH-ubiquinone oxidoreductase chain 4 (446 aa).

The next 13 helical transmembrane spans lie at 4–24 (IILF…YWMV), 56–76 (MLSY…LLAS), 93–113 (IVIL…FMFY), 114–134 (LFFE…GYQP), 141–161 (VYLL…IFYV), 182–202 (LLYF…LVHL), 212–232 (PVSG…YGLL), 245–265 (YSFV…LVCL), 272–292 (ALIA…LLTM), 297–317 (LCGS…LFCL), 330–350 (MLIN…WFLL), 373–393 (IVSW…FSAA), and 426–446 (LLHW…ILWL).

Belongs to the complex I subunit 4 family.

The protein localises to the mitochondrion membrane. It carries out the reaction a ubiquinone + NADH + 5 H(+)(in) = a ubiquinol + NAD(+) + 4 H(+)(out). Functionally, core subunit of the mitochondrial membrane respiratory chain NADH dehydrogenase (Complex I) that is believed to belong to the minimal assembly required for catalysis. Complex I functions in the transfer of electrons from NADH to the respiratory chain. The immediate electron acceptor for the enzyme is believed to be ubiquinone. The polypeptide is NADH-ubiquinone oxidoreductase chain 4 (mt:ND4) (Drosophila yakuba (Fruit fly)).